We begin with the raw amino-acid sequence, 345 residues long: Inositol phosphoceramide mannosyltransferase 2 (345 aa).

Residues 4-24 (VIYKFAVFAAVNFFLMSSIVL) traverse the membrane as a helical segment. N-linked (GlcNAc...) asparagine glycosylation is present at N55. Residues 220–240 (YWLPYLTIMLSTGPLSISFLW) traverse the membrane as a helical segment. N-linked (GlcNAc...) asparagine glycosylation occurs at N269. A helical transmembrane segment spans residues 296–316 (LAYVIVAGFCLYFILSYMFFS).

Belongs to the glycosyltransferase 32 family.

It is found in the golgi apparatus. The protein localises to the cis-Golgi network membrane. It localises to the trans-Golgi network membrane. Functionally, with imt1 and imt3, is required for the synthesis of mannosyl phosphorylinositol ceramide (MIPC). Catalyzes the addition of mannosyl to phosphorylinositol ceramide (IPC). MIPC is essential for cell morphology, cell-surface distribution of ergosterol, localization for plasma-membrane transporters, and lipid-raft-mediated endocytosis of plasma membrane proteins to the vacuole. The polypeptide is Inositol phosphoceramide mannosyltransferase 2 (Schizosaccharomyces pombe (strain 972 / ATCC 24843) (Fission yeast)).